Reading from the N-terminus, the 69-residue chain is DNA-directed RNA polymerase subunit omega (69 aa).

The protein belongs to the RNA polymerase subunit omega family. As to quaternary structure, the RNAP catalytic core consists of 2 alpha, 1 beta, 1 beta' and 1 omega subunit. When a sigma factor is associated with the core the holoenzyme is formed, which can initiate transcription.

The catalysed reaction is RNA(n) + a ribonucleoside 5'-triphosphate = RNA(n+1) + diphosphate. Promotes RNA polymerase assembly. Latches the N- and C-terminal regions of the beta' subunit thereby facilitating its interaction with the beta and alpha subunits. This Symbiobacterium thermophilum (strain DSM 24528 / JCM 14929 / IAM 14863 / T) protein is DNA-directed RNA polymerase subunit omega.